Here is a 347-residue protein sequence, read N- to C-terminus: Elongation factor Ts (347 aa).

Residues 80 to 83 form an involved in Mg(2+) ion dislocation from EF-Tu region; sequence TDFV.

Belongs to the EF-Ts family.

It is found in the cytoplasm. Associates with the EF-Tu.GDP complex and induces the exchange of GDP to GTP. It remains bound to the aminoacyl-tRNA.EF-Tu.GTP complex up to the GTP hydrolysis stage on the ribosome. In Streptococcus sanguinis (strain SK36), this protein is Elongation factor Ts.